Here is a 126-residue protein sequence, read N- to C-terminus: Aspartate 1-decarboxylase (126 aa).

Ser-25 serves as the catalytic Schiff-base intermediate with substrate; via pyruvic acid. Ser-25 is subject to Pyruvic acid (Ser). A substrate-binding site is contributed by Thr-57. The Proton donor role is filled by Tyr-58. Residue Gly-73–Ala-75 coordinates substrate.

This sequence belongs to the PanD family. As to quaternary structure, heterooctamer of four alpha and four beta subunits. Pyruvate is required as a cofactor. Post-translationally, is synthesized initially as an inactive proenzyme, which is activated by self-cleavage at a specific serine bond to produce a beta-subunit with a hydroxyl group at its C-terminus and an alpha-subunit with a pyruvoyl group at its N-terminus.

Its subcellular location is the cytoplasm. The enzyme catalyses L-aspartate + H(+) = beta-alanine + CO2. It participates in cofactor biosynthesis; (R)-pantothenate biosynthesis; beta-alanine from L-aspartate: step 1/1. Its function is as follows. Catalyzes the pyruvoyl-dependent decarboxylation of aspartate to produce beta-alanine. This Cronobacter sakazakii (strain ATCC BAA-894) (Enterobacter sakazakii) protein is Aspartate 1-decarboxylase.